We begin with the raw amino-acid sequence, 333 residues long: Nucleoid-associated protein HAPS_0704 (333 aa).

The protein belongs to the YejK family.

It localises to the cytoplasm. The protein resides in the nucleoid. This chain is Nucleoid-associated protein HAPS_0704, found in Glaesserella parasuis serovar 5 (strain SH0165) (Haemophilus parasuis).